The following is a 142-amino-acid chain: Salivary protein 15b (142 aa).

The first 20 residues, M1–A20, serve as a signal peptide directing secretion. Intrachain disulfides connect C27–C44, C40–C108, and C91–C117.

The protein belongs to the PBP/GOBP family. Female salivary gland.

It localises to the secreted. Inhibits contact coagulation pathway activation in the host by sequestering anionic polymers, such as dextran sulfate and heparin, and thus blocking interaction of protein components of the pathway with negatively charged surfaces. Inhibits dextran sulfate-mediated autoactivation of host coagulation factor XII (F12). Inhibits dextran sulfate-mediated activation of host factor XI (F11) by activated F12. Inhibits polyphosphate-induced plasma extravasation at the injection site in mouse model, probably via inhibition of bradykinin generation in host skin. In Phlebotomus duboscqi (Sandfly), this protein is Salivary protein 15b.